Reading from the N-terminus, the 170-residue chain is uncharacterized protein (170 aa).

A run of 3 helical transmembrane segments spans residues 31–51, 58–78, and 133–153; these read ILAV…FYIF, LFLI…LLLF, and IDFI…MLLF.

This sequence to M.jannaschii MJ0554 and MJ0587.

It localises to the cell membrane. This is an uncharacterized protein from Methanocaldococcus jannaschii (strain ATCC 43067 / DSM 2661 / JAL-1 / JCM 10045 / NBRC 100440) (Methanococcus jannaschii).